Here is a 35-residue protein sequence, read N- to C-terminus: Photosystem II reaction center protein T (35 aa).

The helical transmembrane segment at 3–23 (ALVYTFLLVSTLGIIFFAIFF) threads the bilayer.

The protein belongs to the PsbT family. PSII is composed of 1 copy each of membrane proteins PsbA, PsbB, PsbC, PsbD, PsbE, PsbF, PsbH, PsbI, PsbJ, PsbK, PsbL, PsbM, PsbT, PsbY, PsbZ, Psb30/Ycf12, at least 3 peripheral proteins of the oxygen-evolving complex and a large number of cofactors. It forms dimeric complexes.

It is found in the plastid. It localises to the chloroplast thylakoid membrane. Found at the monomer-monomer interface of the photosystem II (PS II) dimer, plays a role in assembly and dimerization of PSII. PSII is a light-driven water plastoquinone oxidoreductase, using light energy to abstract electrons from H(2)O, generating a proton gradient subsequently used for ATP formation. This is Photosystem II reaction center protein T from Citrus sinensis (Sweet orange).